Reading from the N-terminus, the 398-residue chain is Arylacetamide deacetylase (398 aa).

The Cytoplasmic portion of the chain corresponds to 1 to 4; sequence GVKT. The chain crosses the membrane as a helical; Signal-anchor for type II membrane protein span at residues 5 to 22; sequence VLLLIVGVLGAYYVYTPL. The Lumenal portion of the chain corresponds to 23–398; it reads PDNIEEPWRL…QYFEWLRENV (376 aa). N-linked (GlcNAc...) asparagine glycosylation is present at Asn-77. The Involved in the stabilization of the negatively charged intermediate by the formation of the oxyanion hole signature appears at 110 to 112; it reads HGG. Residues Cys-115 and Cys-339 are joined by a disulfide bond. Ser-188 is a catalytic residue. A glycan (N-linked (GlcNAc...) asparagine) is linked at Asn-281. Active-site residues include Asp-342 and His-372.

This sequence belongs to the 'GDXG' lipolytic enzyme family. Glycosylated.

It localises to the endoplasmic reticulum membrane. It is found in the microsome membrane. The enzyme catalyses a triacylglycerol + H2O = a diacylglycerol + a fatty acid + H(+). Inhibited by diisopropylphosphofluoridate (DFP). Displays cellular triglyceride lipase activity in liver, increases the levels of intracellular fatty acids derived from the hydrolysis of newly formed triglyceride stores and plays a role in very low-density lipoprotein assembly. Displays serine esterase activity in liver. Deacetylates a variety of arylacetamide substrates, including xenobiotic compounds and procarcinogens, converting them to the primary arylamide compounds and increasing their toxicity. This is Arylacetamide deacetylase from Oryctolagus cuniculus (Rabbit).